A 72-amino-acid polypeptide reads, in one-letter code: Translation initiation factor IF-1 (72 aa).

In terms of domain architecture, S1-like spans 1–72; sequence MSKEGKITLK…TRGRIIYRIS (72 aa).

This sequence belongs to the IF-1 family. In terms of assembly, component of the 30S ribosomal translation pre-initiation complex which assembles on the 30S ribosome in the order IF-2 and IF-3, IF-1 and N-formylmethionyl-tRNA(fMet); mRNA recruitment can occur at any time during PIC assembly.

Its subcellular location is the cytoplasm. Functionally, one of the essential components for the initiation of protein synthesis. Stabilizes the binding of IF-2 and IF-3 on the 30S subunit to which N-formylmethionyl-tRNA(fMet) subsequently binds. Helps modulate mRNA selection, yielding the 30S pre-initiation complex (PIC). Upon addition of the 50S ribosomal subunit IF-1, IF-2 and IF-3 are released leaving the mature 70S translation initiation complex. This chain is Translation initiation factor IF-1, found in Malacoplasma penetrans (strain HF-2) (Mycoplasma penetrans).